Reading from the N-terminus, the 106-residue chain is ATP-dependent Clp protease adapter protein ClpS (106 aa).

The disordered stretch occupies residues 1 to 20 (MKVDMSTSVKDDAQLEASRV).

This sequence belongs to the ClpS family. In terms of assembly, binds to the N-terminal domain of the chaperone ClpA.

Its function is as follows. Involved in the modulation of the specificity of the ClpAP-mediated ATP-dependent protein degradation. The polypeptide is ATP-dependent Clp protease adapter protein ClpS (Chromobacterium violaceum (strain ATCC 12472 / DSM 30191 / JCM 1249 / CCUG 213 / NBRC 12614 / NCIMB 9131 / NCTC 9757 / MK)).